We begin with the raw amino-acid sequence, 525 residues long: Pre-mRNA-processing factor 19 homolog 2 (525 aa).

The U-box domain occupies 1–70; it reads MNCAISGEVP…PKTLHTASIP (70 aa). WD repeat units follow at residues 220 to 261, 262 to 301, 307 to 346, 351 to 390, 393 to 431, 433 to 469, and 478 to 517; these read TNKP…STLT, GHSKKVTSVKFVGDSDLVLTASADKTVRIWRNPGDGNYAC, DHSAEVRAVTVHPTNKYFVSASLDGTWCFYDLSSGSCLAQ, SKNVDYTAAAFHPDGLILGTGTSQSVVKIWDVKSQANVAK, GHTGEVTAISFSENGYFLATAAEDGVRLWDLRKLRNFKS, LSADANSVEFDPSGSYLGIAASDIKVYQTASVKAEWN, and SGTGKATCVKFGSDAQYVAVGSMDRNLRIFGLPGDEKANV. The short motif at 409-424 is the DWD box element; the sequence is FLATAAEDGVRLWDLR.

This sequence belongs to the WD repeat PRP19 family. In terms of assembly, homotetramer. Component of the multiprotein assembly MOS4-associated complex (MAC) at least composed of MOS4, CDC5, PRL1 and PRP19 which is related to the PRP19C/Prp19 complex/NTC/Nineteen complex identified in other organisms. Associated with the spliceosome.

Its subcellular location is the nucleus. The enzyme catalyses S-ubiquitinyl-[E2 ubiquitin-conjugating enzyme]-L-cysteine + [acceptor protein]-L-lysine = [E2 ubiquitin-conjugating enzyme]-L-cysteine + N(6)-ubiquitinyl-[acceptor protein]-L-lysine.. The protein operates within protein modification; protein ubiquitination. Functionally, probable ubiquitin-protein ligase which is mainly involved pre-mRNA splicing and DNA repair. Component of the MAC complex that probably regulates defense responses through transcriptional control and thereby is essential for plant innate immunity. The sequence is that of Pre-mRNA-processing factor 19 homolog 2 (PRP19B) from Arabidopsis thaliana (Mouse-ear cress).